The chain runs to 483 residues: Adenylyltransferase and sulfurtransferase uba4 (483 aa).

Residues G100, D121, 128–132 (SNLHR), K145, and 178–179 (DN) contribute to the ATP site. 2 residues coordinate Zn(2+): C227 and C230. C244 acts as the Glycyl thioester intermediate; for adenylyltransferase activity in catalysis. Zn(2+) is bound by residues C306 and C309. Residues 366-481 (ISKEPTIIDV…WREQIDPDWP (116 aa)) enclose the Rhodanese domain. The active-site Cysteine persulfide intermediate; for sulfurtransferase activity is the C436.

The protein in the N-terminal section; belongs to the HesA/MoeB/ThiF family. UBA4 subfamily. It depends on Zn(2+) as a cofactor.

It is found in the cytoplasm. The protein resides in the cytosol. The catalysed reaction is [molybdopterin-synthase sulfur-carrier protein]-C-terminal Gly-Gly + ATP + H(+) = [molybdopterin-synthase sulfur-carrier protein]-C-terminal Gly-Gly-AMP + diphosphate. It catalyses the reaction [molybdopterin-synthase sulfur-carrier protein]-C-terminal Gly-Gly-AMP + S-sulfanyl-L-cysteinyl-[cysteine desulfurase] + AH2 = [molybdopterin-synthase sulfur-carrier protein]-C-terminal-Gly-aminoethanethioate + L-cysteinyl-[cysteine desulfurase] + A + AMP + 2 H(+). Its pathway is tRNA modification; 5-methoxycarbonylmethyl-2-thiouridine-tRNA biosynthesis. Its function is as follows. Plays a central role in 2-thiolation of mcm(5)S(2)U at tRNA wobble positions of cytosolic tRNA(Lys), tRNA(Glu) and tRNA(Gln). Also essential during biosynthesis of the molybdenum cofactor. Acts by mediating the C-terminal thiocarboxylation of sulfur carriers urm1 and mocs2a. Its N-terminus first activates urm1 and mocs2a as acyl-adenylates (-COAMP), then the persulfide sulfur on the catalytic cysteine is transferred to urm1 and mocs2a to form thiocarboxylation (-COSH) of their C-terminus. The reaction probably involves hydrogen sulfide that is generated from the persulfide intermediate and that acts as a nucleophile towards urm1 and mocs2a. Subsequently, a transient disulfide bond is formed. Does not use thiosulfate as sulfur donor; nfs1 probably acting as a sulfur donor for thiocarboxylation reactions. The protein is Adenylyltransferase and sulfurtransferase uba4 of Neosartorya fischeri (strain ATCC 1020 / DSM 3700 / CBS 544.65 / FGSC A1164 / JCM 1740 / NRRL 181 / WB 181) (Aspergillus fischerianus).